The chain runs to 650 residues: MKTQKNIFKVKALLLSLFSAAVTITIFALPIFANNGSKTDLGLLSKNSADFLGSSKRSLAGFDTPFSPDNLQYLEKETDYDQNFKSFTEKFKDEKITNNQLGIVDIYNLFSGFHKSVKSTVDLMNQLQKQVEAANAIFPVDDAFVKLPKVPTELFKLVDDNVFPKLNPKGLNISDNIAALFERYNLKSIELKNFDLAFLRKADVIIKDKVRYNFEMQMQFQTVYVGGGNTVINLDFTLKAQTVNFANLQDLQNTFVKVGNDLSTQLFWIPTVNKLTDNAGNDLTHIAKTVIGESFFQTNVNLAKSVIEYDKVQPLVKQAFEERVLTPFKKEREAAKKAYEEEQRRLEEERKRQLEELRRREAEEKRKAEEAKRNQEKARREREAYEKSFNSFKDFKFYWLTKGKDVTKKADLIDALKTAIATPAYRNRTFSLLIKGFASGVERYFNANKNDKELKKLAFGEKGIQFPRADAGVNGLYMSNFLRHELTSKAKFSLNLKDIKVENTVEDTQLYWKDNGIHLKQANPYKFNLNIKIKYNGWYNVHWWNWLPAKILGIPTDWSGEMNLTFVVNGDLSEIVDKHDYPGTFFQFTDKNELLFTLAVREQIKVDNNHFMGLLKSQNLHNLQLASGATKPPVVDLASYFHFVLLTEKS.

It belongs to the MG032/MG096/MG288 family.

This is an uncharacterized protein from Mycoplasma genitalium (strain ATCC 33530 / DSM 19775 / NCTC 10195 / G37) (Mycoplasmoides genitalium).